Reading from the N-terminus, the 129-residue chain is Serum amyloid A-1 protein (129 aa).

The signal sequence occupies residues 1–18 (MKLFTGLIFCSLVLGVSS). Residues 19-44 (QWYSFIGEAAQGAWDMYRAYSDMIEA) are important for amyloid formation. The interval 92-129 (GDSGHGVEDSKADQAANEWGRSGKDPNHFRPPGLPDKY) is disordered.

This sequence belongs to the SAA family. Homohexamer; dimer of trimers. Can form amyloid fibrils after partial proteolysis; the native, undenatured protein does not form amyloid fibrils (in vitro). Apolipoprotein of the HDL complex. Binds to heparin. In terms of tissue distribution, detected in liver.

The protein localises to the secreted. Its function is as follows. Major acute phase protein. The protein is Serum amyloid A-1 protein (SAA1) of Neovison vison (American mink).